The following is a 556-amino-acid chain: Arginine--tRNA ligase (556 aa).

A 'HIGH' region motif is present at residues 132 to 142; sequence ANPTGDLHLGH.

The protein belongs to the class-I aminoacyl-tRNA synthetase family. As to quaternary structure, monomer.

The protein localises to the cytoplasm. It catalyses the reaction tRNA(Arg) + L-arginine + ATP = L-arginyl-tRNA(Arg) + AMP + diphosphate. In Listeria monocytogenes serotype 4a (strain HCC23), this protein is Arginine--tRNA ligase.